Consider the following 162-residue polypeptide: Calcium-binding protein 4b (162 aa).

EF-hand domains lie at 10–45 (ELTN…CKYP), 46–81 (NPTL…DYII), 85–120 (TCLK…SGSN), and 123–158 (QAKV…YFEI). Ca(2+)-binding residues include Asp23, Asn25, Asp27, Gln29, Glu34, Asp59, Asp61, Asp63, Lys65, and Glu70. Residues Asp136, Asp138, Asp140, Cys142, and Glu147 each coordinate Ca(2+).

In Dictyostelium discoideum (Social amoeba), this protein is Calcium-binding protein 4b (cbpD2).